Reading from the N-terminus, the 535-residue chain is Cytochrome c oxidase subunit 1 (535 aa).

The helical transmembrane segment at 21–43 threads the bilayer; that stretch reads VLYFIFALFSAMIGTGLSAIIRL. Ca(2+) is bound by residues E44 and G49. The next 6 helical transmembrane spans lie at 63–85, 106–128, 153–175, 188–210, 242–264, and 271–293; these read VITAHAILMIFFFVMPALVGGFG, ISFWLLVPSLILILTSALVEAGA, IFSLHLSGFSSLLGAINFITTFI, PLFAWAVLFTAILLLLSLPVLAA, YWWNHPEVYILIIPGFGIISHAV, and PVFGVQGMIYAMWSIGLLGFCVW. H67 contributes to the Fe(II)-heme a binding site. H246 contacts Cu cation. A cross-link (1'-histidyl-3'-tyrosine (His-Tyr)) is located at residues 246–250; sequence HPEVY. Y250 contributes to the O2 binding site. Cu cation-binding residues include H295 and H296. 2 helical membrane-spanning segments follow: residues 308 to 330 and 342 to 364; these read AYFTSATMVIAVPTSIKIFSWLA and TALFALGFIFLFTIGGLTGVVLA. The Mg(2+) site is built by H373 and D374. 3 consecutive transmembrane segments (helical) span residues 379 to 401, 414 to 436, and 456 to 478; these read VAHFHYVLSMGAVFSIFCGWYLW, LSHIHFWLMFIGVNVTFFPMHFL, and NQVASLGSIISIVASIVFIYVVY. Residue H381 participates in heme a3 binding. H383 contributes to the Fe(II)-heme a binding site.

The protein belongs to the heme-copper respiratory oxidase family. In terms of assembly, component of the cytochrome c oxidase (complex IV, CIV), a multisubunit enzyme composed of a catalytic core of 3 subunits and several supernumerary subunits. The complex exists as a monomer or a dimer and forms supercomplexes (SCs) in the inner mitochondrial membrane with ubiquinol-cytochrome c oxidoreductase (cytochrome b-c1 complex, complex III, CIII). It depends on heme as a cofactor. Cu cation serves as cofactor.

Its subcellular location is the mitochondrion inner membrane. It carries out the reaction 4 Fe(II)-[cytochrome c] + O2 + 8 H(+)(in) = 4 Fe(III)-[cytochrome c] + 2 H2O + 4 H(+)(out). The protein operates within energy metabolism; oxidative phosphorylation. Its function is as follows. Component of the cytochrome c oxidase, the last enzyme in the mitochondrial electron transport chain which drives oxidative phosphorylation. The respiratory chain contains 3 multisubunit complexes succinate dehydrogenase (complex II, CII), ubiquinol-cytochrome c oxidoreductase (cytochrome b-c1 complex, complex III, CIII) and cytochrome c oxidase (complex IV, CIV), that cooperate to transfer electrons derived from NADH and succinate to molecular oxygen, creating an electrochemical gradient over the inner membrane that drives transmembrane transport and the ATP synthase. Cytochrome c oxidase is the component of the respiratory chain that catalyzes the reduction of oxygen to water. Electrons originating from reduced cytochrome c in the intermembrane space (IMS) are transferred via the dinuclear copper A center (CU(A)) of subunit 2 and heme A of subunit 1 to the active site in subunit 1, a binuclear center (BNC) formed by heme A3 and copper B (CU(B)). The BNC reduces molecular oxygen to 2 water molecules using 4 electrons from cytochrome c in the IMS and 4 protons from the mitochondrial matrix. This is Cytochrome c oxidase subunit 1 (COX1) from Yarrowia lipolytica (strain CLIB 122 / E 150) (Yeast).